Here is a 231-residue protein sequence, read N- to C-terminus: Protein PIMREG (231 aa).

The tract at residues 1-44 (MASQWQGMRTSVRRRSLLKEEQLEKKEVTRSAGGHPETGPLGSL) is disordered. Serine 11 and serine 16 each carry phosphoserine. Short sequence motifs (D-box) lie at residues 14–17 (RRSL) and 53–56 (PLRA). Positions 17–29 (LLKEEQLEKKEVT) are enriched in basic and acidic residues. Position 72 is a phosphoserine (serine 72). Disordered regions lie at residues 115–138 (KVRR…QKNT) and 152–197 (HLRL…DLEP). Position 128 is a phosphoserine; by Uhmk1; in vitro (serine 128). Polar residues predominate over residues 178–190 (PCSSTEPLCSPSE). A phosphoserine mark is found at serine 191 and serine 193.

As to quaternary structure, interacts with PICALM; this interaction may target PICALM to the nucleus. During mitosis, associates with HDAC2 and MTA2 subunits of the chromatin-remodeling NuRD complex; this association is strongest at prometaphase and decreases as the cell progresses through metaphase and anaphase. Post-translationally, ubiquitinated by the anaphase-promoting complex/cyclosome (APC/C) complex in the presence of FZR1, leading to its degradation by the proteasome during mitotic exit. However, degradation is not essential for normal mitotic progression within a single cell cycle. In terms of tissue distribution, mainly expressed in thymus and ovary. Expressed in all T-cell subpopulations isolated from the thymus, macrophages, pro-erythrocytes, granulocytes, mast cells and progenitor cells.

It localises to the nucleus. Its subcellular location is the nucleolus. In terms of biological role, during mitosis, may play a role in the metaphase-to-anaphase transition. The polypeptide is Protein PIMREG (Mus musculus (Mouse)).